Here is a 698-residue protein sequence, read N- to C-terminus: Polyphosphate kinase 1 (698 aa).

Asn46 contacts ATP. 2 residues coordinate Mg(2+): Arg377 and Arg407. His437 acts as the Phosphohistidine intermediate in catalysis. The ATP site is built by Tyr470, Arg566, and His594.

The protein belongs to the polyphosphate kinase 1 (PPK1) family. The cofactor is Mg(2+). In terms of processing, an intermediate of this reaction is the autophosphorylated ppk in which a phosphate is covalently linked to a histidine residue through a N-P bond.

The catalysed reaction is [phosphate](n) + ATP = [phosphate](n+1) + ADP. Catalyzes the reversible transfer of the terminal phosphate of ATP to form a long-chain polyphosphate (polyP). This chain is Polyphosphate kinase 1, found in Chlorobaculum tepidum (strain ATCC 49652 / DSM 12025 / NBRC 103806 / TLS) (Chlorobium tepidum).